We begin with the raw amino-acid sequence, 135 residues long: S-protein homolog 29 (135 aa).

The N-terminal stretch at 1-24 (MKNSSKIFVVLSIILFYVISSCHG) is a signal peptide. N-linked (GlcNAc...) asparagine glycosylation occurs at Asn110.

The protein belongs to the plant self-incompatibility (S1) protein family.

It is found in the secreted. The protein is S-protein homolog 29 of Arabidopsis thaliana (Mouse-ear cress).